A 499-amino-acid chain; its full sequence is MTQFIGSIDQGTTSSRFIIFDRQGDIVASDQREHEQIYPKAGWVEHNPIEIWRNTQHVIAAALKKAKLKASDIASVGITNQRETTLLWDRKTGAPLYNAIVWMDTRTDELVSRYTKDGGADQLRAKTGLPISTYFSGLKLRWILDNVPGAREKAEAGDALFGTIDTWLVWNLTGGTEGGIHITDVTNASRTQLMDLSTLQWDEDILRLFDIPSACLPEIRSSSEVYGEITLPSLSGVKLAGILGDQQAALFGQACLEPGEAKNTYGTGCFMLMNTGEKLVPSNYGLLTTVAYKLDGAKPVYALEGSIAITGALVQWLRDNLGIIRNSSDIETLARTVEDNGDVYFVPAFSGLFAPHWQDSARGIIAGLTRFANKGHIARAALEASAYQVREVLDAMVKDSGVEITELRADGGMTINELLMQFQSDILDVPVVRPKIIETTALGAAYAAGLAVGYWKSTKDIVENWQVGHRWHPRMSAEESTRLFNAWEKAVQRSLGWIE.

T12 lines the ADP pocket. 3 residues coordinate ATP: T12, T13, and S14. Residue T12 participates in sn-glycerol 3-phosphate binding. R16 provides a ligand contact to ADP. Sn-glycerol 3-phosphate-binding residues include R82, E83, Y134, and D245. Positions 82, 83, 134, 245, and 246 each coordinate glycerol. ADP-binding residues include T267 and G311. Positions 267, 311, 315, and 412 each coordinate ATP. The ADP site is built by G412 and N416.

Belongs to the FGGY kinase family.

The catalysed reaction is glycerol + ATP = sn-glycerol 3-phosphate + ADP + H(+). It functions in the pathway polyol metabolism; glycerol degradation via glycerol kinase pathway; sn-glycerol 3-phosphate from glycerol: step 1/1. With respect to regulation, inhibited by fructose 1,6-bisphosphate (FBP). Functionally, key enzyme in the regulation of glycerol uptake and metabolism. Catalyzes the phosphorylation of glycerol to yield sn-glycerol 3-phosphate. The protein is Glycerol kinase of Brucella anthropi (strain ATCC 49188 / DSM 6882 / CCUG 24695 / JCM 21032 / LMG 3331 / NBRC 15819 / NCTC 12168 / Alc 37) (Ochrobactrum anthropi).